A 360-amino-acid chain; its full sequence is Protein phosphatase 1L (360 aa).

The Extracellular segment spans residues 1–25; sequence MIEDTMTLLSLLGRIMRYFLLRPET. A helical transmembrane segment spans residues 26–42; that stretch reads LFLLCISLALWSYFFHT. At 43–360 the chain is on the cytoplasmic side; that stretch reads DEVKTIVKSS…FRNSSKTEEQ (318 aa). In terms of domain architecture, PPM-type phosphatase spans 92–351; it reads NVAVYSIQGR…DNITVMVVKF (260 aa). Mn(2+) is bound by residues aspartate 128, glycine 129, aspartate 302, and aspartate 342.

Belongs to the PP2C family. As to quaternary structure, interacts with MAP3K7/TAK1 and MAP3K5. Mg(2+) is required as a cofactor. Mn(2+) serves as cofactor.

It localises to the membrane. The catalysed reaction is O-phospho-L-seryl-[protein] + H2O = L-seryl-[protein] + phosphate. It catalyses the reaction O-phospho-L-threonyl-[protein] + H2O = L-threonyl-[protein] + phosphate. In terms of biological role, acts as a suppressor of the SAPK signaling pathways by associating with and dephosphorylating MAP3K7/TAK1 and MAP3K5, and by attenuating the association between MAP3K7/TAK1 and MAP2K4 or MAP2K6. This chain is Protein phosphatase 1L (PPM1L), found in Bos taurus (Bovine).